Consider the following 209-residue polypeptide: Ribosome maturation factor RimM (209 aa).

The PRC barrel domain occupies 103 to 178 (EGATYVSDLV…RIEMVLPQGM (76 aa)). The disordered stretch occupies residues 184–209 (PLSKAEKERQKSEADETREAGERRKR). A compositionally biased stretch (basic and acidic residues) spans 187-209 (KAEKERQKSEADETREAGERRKR).

It belongs to the RimM family. As to quaternary structure, binds ribosomal protein uS19.

It is found in the cytoplasm. In terms of biological role, an accessory protein needed during the final step in the assembly of 30S ribosomal subunit, possibly for assembly of the head region. Essential for efficient processing of 16S rRNA. May be needed both before and after RbfA during the maturation of 16S rRNA. It has affinity for free ribosomal 30S subunits but not for 70S ribosomes. The chain is Ribosome maturation factor RimM from Koribacter versatilis (strain Ellin345).